The following is a 2085-amino-acid chain: Protein MLP1 homolog (2085 aa).

6 coiled-coil regions span residues 44-367, 399-513, 568-630, 675-1205, 1232-1667, and 1744-1799; these read KIRE…SHDG, KATQ…HVLI, YELQ…RMKS, ANEA…KRTQ, LRRE…LQQE, and EIEA…AAKE. Positions 365-398 are disordered; that stretch reads HDGVPGSVPQTPRANGSLLARPSSPFGTPASLRG. The disordered stretch occupies residues 934 to 953; sequence AERLRPLPTPRAPAAAEQPS. Positions 1159–1166 match the Nuclear localization signal motif; that stretch reads ERRQRLEQ. Over residues 1482–1503 the composition is skewed to polar residues; it reads LATATEKNTSLQQQLAASSTEQ. Disordered stretches follow at residues 1482–1514 and 1567–1591; these read LATATEKNTSLQQQLAASSTEQPAAAPVSAAPS and SGGDVATAETSVSAQPSAGLSDEER. Low complexity predominate over residues 1504 to 1514; sequence PAAAPVSAAPS. Residues 1574–1584 are compositionally biased toward polar residues; it reads AETSVSAQPSA. The segment at 1816–2085 is disordered; that stretch reads KPPAPAQAPA…GGGGGGGGNQ (270 aa). Positions 1817–1827 are enriched in pro residues; it reads PPAPAQAPAPA. Low complexity-rich tracts occupy residues 1843–1858, 1910–1974, and 1982–1994; these read VAPATAAPAAPAQAPS, QAGQ…PVPA, and ARTARGLYQAGPR. The segment covering 1995–2016 has biased composition (gly residues); sequence GARGGRGGGFVGAGRGAGGAAG. Over residues 2028-2040 the composition is skewed to low complexity; that stretch reads GGATATAAAAAAA. Composition is skewed to gly residues over residues 2041-2051 and 2076-2085; these read GGAGGSAGAGN and GGGGGGGGNQ.

The nuclear pore complex (NPC) constitutes the exclusive means of nucleocytoplasmic transport. NPCs allow the passive diffusion of ions and small molecules and the active, nuclear transport receptor-mediated bidirectional transport of macromolecules such as proteins, RNAs, ribonucleoparticles (RNPs), and ribosomal subunits across the nuclear envelope. The 55-60 MDa NPC is composed of at least 28 different subunits: AMO1, ELYS, GLE1, GLE2, MLP1, NDC1, NIC96, NSP1, NUP133, NUP145, NUP152, NUP159, NUP170, NUP188, NUP192, NUP37, NUP49, NUP53, NUP56, NUP57, NUP82, NUP84, NUP85, POM152, POM33, POM34, SEC13 and SEH1. Due to its 8-fold rotational symmetry, all subunits are present with 8 copies or multiples thereof.

Its subcellular location is the nucleus. Its function is as follows. Involved in the structural and functional organization of perinuclear chromatin. Associates with the nuclear pore complex and form filamentous structures along the nuclear periphery. The sequence is that of Protein MLP1 homolog (MLP1) from Chaetomium thermophilum (strain DSM 1495 / CBS 144.50 / IMI 039719) (Thermochaetoides thermophila).